Here is a 185-residue protein sequence, read N- to C-terminus: Protein-lysine palmitoyltransferase CyaC (185 aa).

Residues histidine 33 and aspartate 102 contribute to the active site.

The protein belongs to the RTX toxin acyltransferase family. As to quaternary structure, homodimer.

The protein localises to the cytoplasm. It catalyses the reaction hexadecanoyl-[ACP] + L-lysyl-[protein] = N(6)-hexadecanoyl-L-lysyl-[protein] + holo-[ACP] + H(+). The enzyme catalyses (9Z)-hexadecenoyl-[ACP] + L-lysyl-[protein] = N(6)-[(9Z)-hexadecenoyl]-L-lysyl-[protein] + holo-[ACP] + H(+). Its function is as follows. Protein-lysine palmitoyltransferase that catalyzes palmitoylation of the protoxin (CyaA) at two internal lysine residues, thereby converting it to the active toxin. This Bordetella bronchiseptica (strain ATCC BAA-588 / NCTC 13252 / RB50) (Alcaligenes bronchisepticus) protein is Protein-lysine palmitoyltransferase CyaC.